Consider the following 97-residue polypeptide: Co-chaperonin GroES (97 aa).

It belongs to the GroES chaperonin family. In terms of assembly, heptamer of 7 subunits arranged in a ring. Interacts with the chaperonin GroEL.

Its subcellular location is the cytoplasm. Together with the chaperonin GroEL, plays an essential role in assisting protein folding. The GroEL-GroES system forms a nano-cage that allows encapsulation of the non-native substrate proteins and provides a physical environment optimized to promote and accelerate protein folding. GroES binds to the apical surface of the GroEL ring, thereby capping the opening of the GroEL channel. The protein is Co-chaperonin GroES of Stenotrophomonas maltophilia (Pseudomonas maltophilia).